The chain runs to 565 residues: Frizzled-2 (565 aa).

A signal peptide spans 1 to 23; it reads MRPRSALPRLLLPLLLLPAAGPA. At 24–247 the chain is on the extracellular side; it reads QFHGEKGISI…QEETRFARLW (224 aa). One can recognise an FZ domain in the interval 34-153; sequence PDHGFCQPIS…HGAEQICVGQ (120 aa). Intrachain disulfides connect Cys39–Cys100, Cys47–Cys93, Cys84–Cys121, Cys110–Cys150, and Cys114–Cys138. An N-linked (GlcNAc...) asparagine glycan is attached at Asn53. The N-linked (GlcNAc...) asparagine glycan is linked to Asn154. The tract at residues 160 to 189 is disordered; it reads APALLTTAPPPGLQPGAGGTPGGPGGGGAP. Over residues 174–188 the composition is skewed to gly residues; it reads PGAGGTPGGPGGGGA. Residues 248-268 traverse the membrane as a helical segment; the sequence is ILTWSVLCCASTFFTVTTYLV. Over 269–279 the chain is Cytoplasmic; that stretch reads DMQRFRYPERP. Residues 280 to 300 form a helical membrane-spanning segment; sequence IIFLSGCYTMVSVAYIAGFVL. At 301 to 327 the chain is on the extracellular side; sequence QERVVCNERFSEDGYRTVVQGTKKEGC. Residues 328–348 form a helical membrane-spanning segment; sequence TILFMMLYFFSMASSIWWVIL. Residues 349–370 are Cytoplasmic-facing; it reads SLTWFLAAGMKWGHEAIEANSQ. The chain crosses the membrane as a helical span at residues 371–391; the sequence is YFHLAAWAVPAVKTITILAMG. The Extracellular portion of the chain corresponds to 392–414; the sequence is QIDGDLLSGVCFVGLNSLDPLRG. Residues 415 to 435 form a helical membrane-spanning segment; the sequence is FVLAPLFVYLFIGTSFLLAGF. The Cytoplasmic segment spans residues 436 to 461; that stretch reads VSLFRIRTIMKHDGTKTEKLERLMVR. Residues 462–482 form a helical membrane-spanning segment; the sequence is IGVFSVLYTVPATIVIACYFY. Residues 483–519 lie on the Extracellular side of the membrane; sequence EQAFREHWERSWVSQHCKSLAIPCPAHYTPRMSPDFT. The helical transmembrane segment at 520-540 threads the bilayer; that stretch reads VYMIKYLMTLIVGITSGFWIW. The Cytoplasmic segment spans residues 541–565; sequence SGKTLHSWRKFYTRLTNSRHGETTV. The Lys-Thr-X-X-X-Trp motif, mediates interaction with the PDZ domain of Dvl family members signature appears at 543-548; the sequence is KTLHSW. Residues 563–565 carry the PDZ-binding motif; it reads TTV.

This sequence belongs to the G-protein coupled receptor Fz/Smo family. (Microbial infection) Interacts with C.difficile toxin TcdB; frizzled receptors constitute the major host receptors for TcdB in the colonic epithelium. Post-translationally, ubiquitinated by ZNRF3, leading to its degradation by the proteasome. As to expression, widely expressed. In the adult, mainly found in heart, placenta, skeletal muscle, lung, kidney, pancreas, prostate, testis, ovary and colon. In the fetus, expressed in brain, lung and kidney. Low levels in fetal liver.

It is found in the membrane. The protein resides in the cell membrane. Functionally, receptor for Wnt proteins. Most of frizzled receptors are coupled to the beta-catenin canonical signaling pathway, which leads to the activation of disheveled proteins, inhibition of GSK-3 kinase, nuclear accumulation of beta-catenin and activation of Wnt target genes. A second signaling pathway involving PKC and calcium fluxes has been seen for some family members, but it is not yet clear if it represents a distinct pathway or if it can be integrated in the canonical pathway, as PKC seems to be required for Wnt-mediated inactivation of GSK-3 kinase. Both pathways seem to involve interactions with G-proteins. May be involved in transduction and intercellular transmission of polarity information during tissue morphogenesis and/or in differentiated tissues. (Microbial infection) Acts as a receptor for C.difficile toxin TcdB in the colonic epithelium. TcdB occupies the binding site for Wnt-adducted palmitoleate in frizzled receptors and TcdB-binding prevents Wnt-binding and downstream Wnt signaling. The protein is Frizzled-2 (FZD2) of Homo sapiens (Human).